A 312-amino-acid polypeptide reads, in one-letter code: Chorismate mutase 1, chloroplastic (312 aa).

A chloroplast-targeting transit peptide spans 1-44; it reads MAFKLATKAAAASPAAAHRGGLARGPEGTSRVAFGPAPRNKGLR. The interval 16 to 58 is disordered; sequence AAHRGGLARGPEGTSRVAFGPAPRNKGLRAANNSATPVAKEER. Residues arginine 58 and 190-193 contribute to the L-phenylalanine site; that span reads NAGS. L-tyrosine contacts are provided by residues arginine 58 and 190-193; that span reads NAGS. In terms of domain architecture, Chorismate mutase spans 58 to 312; that stretch reads RVDRSEILTL…QIAYLLRRLD (255 aa).

As to quaternary structure, homodimer. Interacts with Cmu1 of the fungal pathogen Ustilago maydis.

Its subcellular location is the plastid. It localises to the chloroplast. It catalyses the reaction chorismate = prephenate. The protein operates within metabolic intermediate biosynthesis; prephenate biosynthesis; prephenate from chorismate: step 1/1. With respect to regulation, allosterically inhibited by tyrosine and phenylalanine. Activated by tryptophan. Its function is as follows. May play a role in chloroplast biogenesis. This chain is Chorismate mutase 1, chloroplastic, found in Zea mays (Maize).